The sequence spans 447 residues: Beclin-2 (447 aa).

The stretch at 169–228 (EALHAELCAELSSLEQEEARLTQELEDLDGHHARVAAELRAAQAESKELYKQHEQHRVEY) forms a coiled coil. A required for homodimer formation region spans residues 186-256 (EARLTQELED…NQLTYALSQQ (71 aa)).

This sequence belongs to the beclin family. Homodimer (via coiled-coil domain). Interacts (via coiled-coil domain) with ATG14 (via coiled-coil domain); this interaction is tighter than BECN2 self-association. Interacts with AMBRA1, UVRAG and PIK3C3/VPS34; these interactions are not disrupted by starvation. Does not interact with RUBCN. Interacts (via N-terminus) with GPRASP1/GASP1; the interaction is direct. As to expression, expressed in brain, skeletal muscle, placenta, thymus and uterus. Expressed at a lower level in liver, testis, stomach, and 17-day-old embryos.

The protein localises to the cytoplasm. In terms of biological role, involved in 2 distinct lysosomal degradation pathways: acts as a regulator of autophagy and as a regulator of G-protein coupled receptors turnover. Regulates degradation in lysosomes of a variety of G-protein coupled receptors via its interaction with GPRASP1/GASP1. The chain is Beclin-2 from Mus musculus (Mouse).